We begin with the raw amino-acid sequence, 206 residues long: Imidazoleglycerol-phosphate dehydratase (206 aa).

The protein belongs to the imidazoleglycerol-phosphate dehydratase family.

Its subcellular location is the cytoplasm. The catalysed reaction is D-erythro-1-(imidazol-4-yl)glycerol 3-phosphate = 3-(imidazol-4-yl)-2-oxopropyl phosphate + H2O. The protein operates within amino-acid biosynthesis; L-histidine biosynthesis; L-histidine from 5-phospho-alpha-D-ribose 1-diphosphate: step 6/9. This Leptospira interrogans serogroup Icterohaemorrhagiae serovar copenhageni (strain Fiocruz L1-130) protein is Imidazoleglycerol-phosphate dehydratase.